Reading from the N-terminus, the 621-residue chain is tRNA uridine 5-carboxymethylaminomethyl modification enzyme MnmG (621 aa).

8-13 (GAGHAG) contacts FAD. Residue 269–283 (GPRYCPSIEDKIHRF) participates in NAD(+) binding.

It belongs to the MnmG family. Homodimer. Heterotetramer of two MnmE and two MnmG subunits. The cofactor is FAD.

The protein localises to the cytoplasm. NAD-binding protein involved in the addition of a carboxymethylaminomethyl (cmnm) group at the wobble position (U34) of certain tRNAs, forming tRNA-cmnm(5)s(2)U34. The chain is tRNA uridine 5-carboxymethylaminomethyl modification enzyme MnmG from Chlorobium phaeovibrioides (strain DSM 265 / 1930) (Prosthecochloris vibrioformis (strain DSM 265)).